The chain runs to 279 residues: PHO85 cyclin-1 (279 aa).

Residues 19–152 form the Cyclin N-terminal domain; that stretch reads DIIKFLTDTT…LLQLLNWDLR (134 aa). Residues 29–36 are required for degradation by DMA1; that stretch reads LRVVPSSN. Position 39 is a phosphothreonine; by PHO85 (T39). S43 carries the post-translational modification Phosphoserine; by PHO85. Residues K82 and K121 each participate in a glycyl lysine isopeptide (Lys-Gly) (interchain with G-Cter in ubiquitin) cross-link.

The protein belongs to the cyclin family. PCL1,2 subfamily. Forms a cyclin-CDK complex with PHO85. Interacts with HMS1, NCP1 and NPA3. Interacts with DMA1. Post-translationally, phosphorylated by PHO85; necessary for interaction with DMA1 and subsequent degradation. Ubiquitinated by E3 ubiquitin ligase DMA1 in response to nutrient condition; this targets PCL1 for destruction.

The protein resides in the cytoplasm. Its subcellular location is the nucleus. In terms of biological role, G1/S-specific cyclin partner of the cyclin-dependent kinase (CDK) PHO85. Essential for the control of the cell cycle at the G1/S (start) transition. The PCL1-PHO85 cyclin-CDK holoenzyme is involved in phosphorylation of the CDK inhibitor (CKI) SIC1, which is required for its ubiquitination and degradation, releasing repression of b-type cyclins and promoting exit from mitosis. Together with cyclin PCL2, positively controls degradation of sphingoid long chain base kinase LCB4. PCL1-PHO85 phosphorylates LCB4, which is required for its ubiquitination and degradation. PCL1-PHO85 also phosphorylates HMS1, NCP1 and NPA3, which may all have a role in mitotic exit. The sequence is that of PHO85 cyclin-1 from Saccharomyces cerevisiae (strain ATCC 204508 / S288c) (Baker's yeast).